The following is a 314-amino-acid chain: Methionyl-tRNA formyltransferase (314 aa).

Residue 110–113 (SLLP) coordinates (6S)-5,6,7,8-tetrahydrofolate.

It belongs to the Fmt family.

The catalysed reaction is L-methionyl-tRNA(fMet) + (6R)-10-formyltetrahydrofolate = N-formyl-L-methionyl-tRNA(fMet) + (6S)-5,6,7,8-tetrahydrofolate + H(+). Functionally, attaches a formyl group to the free amino group of methionyl-tRNA(fMet). The formyl group appears to play a dual role in the initiator identity of N-formylmethionyl-tRNA by promoting its recognition by IF2 and preventing the misappropriation of this tRNA by the elongation apparatus. This Dichelobacter nodosus (strain VCS1703A) protein is Methionyl-tRNA formyltransferase.